Here is a 353-residue protein sequence, read N- to C-terminus: Lactosylceramide 4-alpha-galactosyltransferase (353 aa).

Topologically, residues Met-1 to Thr-22 are cytoplasmic. Residues Leu-23 to Val-43 form a helical; Signal-anchor for type II membrane protein membrane-spanning segment. Topologically, residues Gly-44 to Leu-353 are lumenal. Asn-121 carries N-linked (GlcNAc...) asparagine glycosylation. The DXD motif motif lies at Asp-192–Asp-194. A glycan (N-linked (GlcNAc...) asparagine) is linked at Asn-203.

Belongs to the glycosyltransferase 32 family. As to expression, ubiquitous. Highly expressed in kidney, heart, spleen, liver, testis and placenta.

It is found in the golgi apparatus membrane. It carries out the reaction a beta-D-Gal-(1-&gt;4)-beta-D-Glc-(1&lt;-&gt;1)-Cer(d18:1(4E)) + UDP-alpha-D-galactose = a globoside Gb3Cer (d18:1(4E)) + UDP + H(+). The enzyme catalyses a beta-D-Gal-(1&lt;-&gt;1')-ceramide + UDP-alpha-D-galactose = alpha-D-Gal-(1-&gt;4)-beta-D-Gal-(1&lt;-&gt;1')-Cer + UDP + H(+). The protein operates within glycolipid biosynthesis. Catalyzes the transfer of galactose from UDP-alpha-D-galactose to lactosylceramide/beta-D-galactosyl-(1-&gt;4)-beta-D-glucosyl-(1&lt;-&gt;1)-ceramide(d18:1(4E)) to produce globotriaosylceramide/globoside Gb3Cer (d18:1(4E)). Also able to transfer galactose to galactosylceramide/beta-D-Gal-(1&lt;-&gt;1')-Cer. Globoside Gb3Cer is a glycosphingolipid of the globo serie, one of the major types of neutral root structures of glycosphingolipids, that constitute a significant portion of mammalian cell membranes. Globotriaosylceramide/globoside Gb3Cer in blood and tissue cell membranes is the antigen Pk of blood histogroup P. Its function is as follows. (Microbial infection) Globotriaosylceramide is one of the cellular ligands for bacterial verotoxins. This is Lactosylceramide 4-alpha-galactosyltransferase (A4GALT) from Homo sapiens (Human).